The primary structure comprises 323 residues: Ankyrin repeat and SOCS box protein 11 (323 aa).

6 ANK repeats span residues 64 to 93 (ADRSPLHEAAAQGRLLALKTLIAQGVNVNL), 97 to 126 (NRVSSLHEACLGGHVACAKALLENGAHVNG), 130 to 159 (HGATPLFNACCSGSAACVNVLLEFGAKAQL), 162 to 191 (HLASPIHEAVKRGHRECMEILLANNVNIDH), 195 to 224 (QLGTPLYVACTYQRVDCVKKLLELGASVDH), and 227 to 256 (WLDTPLHAAARQSNVEVIHLLTDYGANLKR). The region spanning 273–323 (SVEQALLLREGPPALSQLCRLCVRKCLGRACHQAIHKLHLPEPLERFLLYQ) is the SOCS box domain.

The protein belongs to the ankyrin SOCS box (ASB) family. Substrate-recognition component of the ECS(ASB11) complex, composed of ASB11, CUL5, ELOB, ELOC and RNF7/RBX2.

It localises to the endoplasmic reticulum. Its pathway is protein modification; protein ubiquitination. Functionally, substrate-recognition component of a cullin-5-RING E3 ubiquitin-protein ligase complex (ECS complex, also named CRL5 complex), which mediates the ubiquitination and subsequent proteasomal degradation of target proteins, such as BIK, DIRAS2 and RPN1. The ECS(ASB11) complex acts as a regulator of the endoplasmic reticulum unfolded protein response by mediating ubiquitination and degradation of BIK. In Homo sapiens (Human), this protein is Ankyrin repeat and SOCS box protein 11.